Here is a 313-residue protein sequence, read N- to C-terminus: Protoheme IX farnesyltransferase (313 aa).

The next 9 membrane-spanning stretches (helical) occupy residues 22-42, 46-66, 98-118, 121-141, 150-170, 177-197, 223-243, 246-266, and 284-304; these read FALLKPRVMSLVVFTAFVGLM, IGVHPVIGFCAILFIAIGGGA, GEALSLGLALSGLSVIMLALA, VFAGAFLAFTIFFYVVIYTMW, IVIGGAAGAFPPVIGWIAATG, WLMFALTFLWTPPHFWALALF, ILVYTVILAAFALTTAFTSVG, IYLTTAVVLNALFLKGAVQIW, and FFKLSLLYLFLHFGAILAEAL.

It belongs to the UbiA prenyltransferase family. Protoheme IX farnesyltransferase subfamily. As to quaternary structure, interacts with CtaA.

It localises to the cell inner membrane. It catalyses the reaction heme b + (2E,6E)-farnesyl diphosphate + H2O = Fe(II)-heme o + diphosphate. The protein operates within porphyrin-containing compound metabolism; heme O biosynthesis; heme O from protoheme: step 1/1. Converts heme B (protoheme IX) to heme O by substitution of the vinyl group on carbon 2 of heme B porphyrin ring with a hydroxyethyl farnesyl side group. The chain is Protoheme IX farnesyltransferase from Ruegeria sp. (strain TM1040) (Silicibacter sp.).